A 140-amino-acid polypeptide reads, in one-letter code: Nucleoside diphosphate kinase (140 aa).

Lys-9, Phe-57, Arg-85, Thr-91, Arg-102, and Asn-112 together coordinate ATP. His-115 serves as the catalytic Pros-phosphohistidine intermediate.

The protein belongs to the NDK family. As to quaternary structure, homotetramer. The cofactor is Mg(2+).

It localises to the cytoplasm. The enzyme catalyses a 2'-deoxyribonucleoside 5'-diphosphate + ATP = a 2'-deoxyribonucleoside 5'-triphosphate + ADP. The catalysed reaction is a ribonucleoside 5'-diphosphate + ATP = a ribonucleoside 5'-triphosphate + ADP. Functionally, major role in the synthesis of nucleoside triphosphates other than ATP. The ATP gamma phosphate is transferred to the NDP beta phosphate via a ping-pong mechanism, using a phosphorylated active-site intermediate. The polypeptide is Nucleoside diphosphate kinase (Chlorobium chlorochromatii (strain CaD3)).